A 445-amino-acid chain; its full sequence is Hydroxycinnamoyl-CoA:5-hydroxyanthranilate N-hydroxycinnamoyltransferase HHT4 (445 aa).

This sequence belongs to the plant acyltransferase family.

The enzyme catalyses 5-hydroxyanthranilate + (E)-4-coumaroyl-CoA = avenanthramide A + CoA. The catalysed reaction is 5-hydroxyanthranilate + (E)-caffeoyl-CoA = avenanthramide C + CoA. Involved in the biosynthesis of avenanthramide phytoalexins, which are phenolic alkaloids found mainly in oats. Catalyzes the N-acylation of 5-hydroxyanthranilate with 4-coumaroyl-CoA or caffeoyl-CoA as acyl donors, forming avenanthramide A and avenanthramide C, respectively. Does not accept feruloyl-CoA as a substrate. This chain is Hydroxycinnamoyl-CoA:5-hydroxyanthranilate N-hydroxycinnamoyltransferase HHT4, found in Avena sativa (Oat).